The sequence spans 3603 residues: Plipastatin synthase subunit D (3603 aa).

The tract at residues 7–306 is condensation 1; that stretch reads IQDIYPLSYM…NTMPVRVQGA (300 aa). The interval 7 to 1043 is domain 1 (proline-activating); it reads IQDIYPLSYM…ALIIREAEQN (1037 aa). An adenylation 1 region spans residues 490 to 889; the sequence is TYRELNKAAN…NHPDISEAAI (400 aa). The region spanning 966–1041 is the Carrier 1 domain; it reads APRNLLEAKL…GLALIIREAE (76 aa). The residue at position 1001 (S1001) is an O-(pantetheine 4'-phosphoryl)serine. The segment at 1053–1334 is condensation 2; it reads KRDTYPVSSA…NTLALRTRPA (282 aa). Residues 1053–2069 are domain 2 (glutamine-activating); sequence KRDTYPVSSA…TVEGLATVIR (1017 aa). The segment at 1521-1924 is adenylation 2; sequence TYKELNEQAN…SIEGVREAAV (404 aa). Positions 1997–2072 constitute a Carrier 2 domain; the sequence is APRNVTEMKL…GLATVIREGT (76 aa). S2032 is subject to O-(pantetheine 4'-phosphoryl)serine. Residues 2084 to 2374 are condensation 3; sequence KQETYPVSSA…NTLALRTRPE (291 aa). Residues 2084–3596 form a domain 3 (proline-activating) region; that stretch reads KQETYPVSSA…ELTEDALQEI (1513 aa). The adenylation 3 stretch occupies residues 2560 to 2956; it reads TYQELDEWSN…CIKGVKDAAV (397 aa). The Carrier 3 domain occupies 3034 to 3108; it reads PPSSKMEQIL…ELAAYIRDSD (75 aa). S3069 is modified (O-(pantetheine 4'-phosphoryl)serine). The interval 3116-3596 is epimerization; that stretch reads VEGDVQWSPV…ELTEDALQEI (481 aa).

This sequence belongs to the ATP-dependent AMP-binding enzyme family. Pantetheine 4'-phosphate is required as a cofactor.

In terms of biological role, this protein is a multifunctional enzyme, able to activate and polymerize the amino acids Pro, Gln and Tyr as part of the biosynthesis of the lipopeptide antibiotic plipastatin. The Tyr residue is further epimerized to the D-isomer form. The activation sites for these amino acids consist of individual domains. In Bacillus subtilis (strain 168), this protein is Plipastatin synthase subunit D (ppsD).